We begin with the raw amino-acid sequence, 166 residues long: Co-chaperone protein HscB homolog (166 aa).

The region spanning 3–75 (QYFTLFRIEP…IDRAAYLLKT (73 aa)) is the J domain.

It belongs to the HscB family. Interacts with HscA and stimulates its ATPase activity.

Functionally, co-chaperone involved in the maturation of iron-sulfur cluster-containing proteins. Seems to help targeting proteins to be folded toward HscA. The chain is Co-chaperone protein HscB homolog from Neisseria gonorrhoeae (strain NCCP11945).